The following is a 337-amino-acid chain: Tryptophan--tRNA ligase 2 (337 aa).

ATP is bound by residues Gln-13 to Thr-15 and Gly-22 to Asn-23. Positions Pro-14–Asn-23 match the 'HIGH' region motif. Asp-139 contacts L-tryptophan. Residues Gly-151–Asp-153, Ile-190, and Lys-199–Ser-203 each bind ATP. Residues Lys-199 to Ser-203 carry the 'KMSKS' region motif.

It belongs to the class-I aminoacyl-tRNA synthetase family. Homodimer.

It localises to the cytoplasm. The catalysed reaction is tRNA(Trp) + L-tryptophan + ATP = L-tryptophyl-tRNA(Trp) + AMP + diphosphate + H(+). Its function is as follows. Catalyzes the attachment of tryptophan to tRNA(Trp). This chain is Tryptophan--tRNA ligase 2, found in Streptomyces avermitilis (strain ATCC 31267 / DSM 46492 / JCM 5070 / NBRC 14893 / NCIMB 12804 / NRRL 8165 / MA-4680).